The sequence spans 218 residues: Adenylate kinase (218 aa).

10 to 15 (GAGKGT) serves as a coordination point for ATP. An NMP region spans residues 30–59 (STGDMLRAAVKAGTPLGLEAKKVMDAGGLV). Residues threonine 31, arginine 36, 57 to 59 (GLV), 85 to 88 (GFPR), and glutamine 92 contribute to the AMP site. Positions 122-159 (GRRVHPASGRSYHVRFNPPKAEGVDDVTGEPLVQRDDD) are LID. ATP-binding positions include arginine 123 and 132–133 (SY). AMP contacts are provided by arginine 156 and arginine 167. Glycine 203 contacts ATP.

Belongs to the adenylate kinase family. Monomer.

Its subcellular location is the cytoplasm. It carries out the reaction AMP + ATP = 2 ADP. Its pathway is purine metabolism; AMP biosynthesis via salvage pathway; AMP from ADP: step 1/1. Functionally, catalyzes the reversible transfer of the terminal phosphate group between ATP and AMP. Plays an important role in cellular energy homeostasis and in adenine nucleotide metabolism. The polypeptide is Adenylate kinase (Bordetella bronchiseptica (strain ATCC BAA-588 / NCTC 13252 / RB50) (Alcaligenes bronchisepticus)).